Reading from the N-terminus, the 125-residue chain is Glycine cleavage system H protein (125 aa).

The Lipoyl-binding domain occupies 22-104; it reads SYIIGITDFA…YDTGWILKLT (83 aa). Lys-63 is modified (N6-lipoyllysine).

The protein belongs to the GcvH family. As to quaternary structure, the glycine cleavage system is composed of four proteins: P, T, L and H. It depends on (R)-lipoate as a cofactor.

Its function is as follows. The glycine cleavage system catalyzes the degradation of glycine. The H protein shuttles the methylamine group of glycine from the P protein to the T protein. In terms of biological role, is also involved in protein lipoylation via its role as an octanoyl/lipoyl carrier protein intermediate. In Listeria innocua serovar 6a (strain ATCC BAA-680 / CLIP 11262), this protein is Glycine cleavage system H protein.